A 79-amino-acid chain; its full sequence is Small ribosomal subunit protein uS17 (79 aa).

Belongs to the universal ribosomal protein uS17 family. Part of the 30S ribosomal subunit.

In terms of biological role, one of the primary rRNA binding proteins, it binds specifically to the 5'-end of 16S ribosomal RNA. The sequence is that of Small ribosomal subunit protein uS17 from Rhizobium etli (strain CIAT 652).